The following is a 130-amino-acid chain: Tripartite terminase subunit 2 (130 aa).

The protein belongs to the herpesviridae TRM2 protein family. In terms of assembly, associates with TRM1 and TRM3 to form the tripartite terminase complex.

The protein resides in the host nucleus. Its function is as follows. Component of the molecular motor that translocates viral genomic DNA in empty capsid during DNA packaging. Forms a tripartite terminase complex together with TRM1 and TRM3 in the host cytoplasm. Once the complex reaches the host nucleus, it interacts with the capsid portal vertex. This portal forms a ring in which genomic DNA is translocated into the capsid. This chain is Tripartite terminase subunit 2, found in Homo sapiens (Human).